The primary structure comprises 1392 residues: Leucine-rich PPR motif-containing protein, mitochondrial (1392 aa).

The transit peptide at 1–77 (MSALLRPARW…LPEEPAPVRR (77 aa)) directs the protein to the mitochondrion. PPR repeat units follow at residues 125 to 159 (LLRSCGSLLPELSLAERTEFAHKIWDKLQQLGTVY), 160 to 194 (DVSHYNALLKVYLQNEYRFSPTDFLAKMEGANIQP), 195 to 229 (NRVTYQRLIAAYCSVGDIEGASKILGFMKTRDLPI), 230 to 264 (TEAVFSALVTGHARAGDMESAENILTVMKQAGIEP), 265 to 299 (GPDTYLALLNAHAEKGDIDHVKQILEKVEKSDHYF), 300 to 334 (MDRDFLQIIVSFSKAGYPQYVSEILEKITYERRSI), 402 to 436 (HSSSLQFTLHCALQANKTALAKAVMEALRDEGFPI), 437 to 471 (RTHYFWPLLVGHQKTKNVQGIIDILKIMKEMGVDP), 677 to 708 (VGDPLKQLILLLCSEENMQKALEVKAKYESDM), 709 to 745 (VIGGYAALINLCCRHDNAEDALNLKQEFDRLDPSAVL), 746 to 783 (DTAKYVALVKVLGKHGRVQDAINILKEMKEKDVVIKDA), 784 to 820 (AVLSFFHILNGAALRGEIETVKQLHEAIVTLGLAKPS), 821 to 856 (SNISFPLVTVHLEKDDLPAALEASIACHEKYKVLPR), and 953 to 987 (RDQMYYNLLKLYKISGDWQRADAVWNKMQEENLIP). 2 positions are modified to N6-acetyllysine: Lys-151 and Lys-186. Lys-291 carries the post-translational modification N6-acetyllysine. Position 462 is an N6-acetyllysine (Lys-462). Lys-749 is modified (N6-acetyllysine). A phosphoserine mark is found at Ser-1025, Ser-1026, and Ser-1028. 6 PPR repeats span residues 1030–1064 (GDTVTEKMLLSDCRLKKSKDAYNIFLKAEKQDVVF), 1065–1101 (SSEAYSTLVGLLLSKDDFTRAMHVKDFAETHIKGFTL), 1102–1136 (NGAASSLLIIAQVRRDYLKVALETLKAALDLEQVP), 1137–1173 (SELAVTRLIQALALQGDVKSIETIQKMVKGLDAIELS), 1174–1208 (RMVFINNIALAQMKNNEIDAAIENIEHMLASENQT), and 1315–1349 (NDRVYSCSMKSYVADKDVASAKALYEHLTAKNMKL). Position 1137 is a phosphoserine (Ser-1137).

Component of mRNP complexes associated with HNRPA1. Component of the complex, at least composed of LRPPRC, BECN1 and BCL2; the interactions prevent BECN1 from forming an autophagy-inducing complex with PIK3C3. Interacts with CECR2, HEBP2, MAP1S, UXT, PPARGC1A and FOXO1. Interacts (via N-terminus) with EIF4E; the interaction promotes association of EIF4E with 4ESE-containing mRNAs. Interacts with exportin XPO1/CRM1; interacts both alone and in complex with EIF4E and 4ESE-containing mRNAs to form an EIF4E-dependent mRNA export complex. Interacts with importin IPO8; the interaction occurs when LRPPRC is in its RNA-free form and returns LRPPRC to the nucleus for further export rounds. Interacts with BECN1. In terms of tissue distribution, widely expressed. Expressed in liver, brain and a subset of small diameter sensory neurons in the dorsal root ganglion (at protein level).

It localises to the mitochondrion. The protein resides in the nucleus. The protein localises to the nucleoplasm. Its subcellular location is the nucleus inner membrane. It is found in the nucleus outer membrane. May play a role in RNA metabolism in both nuclei and mitochondria. In the nucleus binds to HNRPA1-associated poly(A) mRNAs and is part of nmRNP complexes at late stages of mRNA maturation which are possibly associated with nuclear mRNA export. Positively modulates nuclear export of mRNAs containing the EIF4E sensitivity element (4ESE) by binding simultaneously to both EIF4E and the 4ESE and acting as a platform for assembly for the RNA export complex. Also binds to exportin XPO1/CRM1 to engage the nuclear pore and traffic the bound mRNAs to the cytoplasm. May bind mature mRNA in the nucleus outer membrane. In mitochondria binds to poly(A) mRNA. Plays a role in translation or stability of mitochondrially encoded cytochrome c oxidase (COX) subunits. May be involved in transcription regulation. Cooperates with PPARGC1A to regulate certain mitochondrially encoded genes and gluconeogenic genes and may regulate docking of PPARGC1A to transcription factors. Seems to be involved in the transcription regulation of the multidrug-related genes MDR1 and MVP. Part of a nuclear factor that binds to the invMED1 element of MDR1 and MVP gene promoters. Binds single-stranded DNA. Required for maintaining mitochondrial potential. Suppresses the initiation of basal levels of autophagy and mitophagy by sustaining BCL2 levels. The polypeptide is Leucine-rich PPR motif-containing protein, mitochondrial (Lrpprc) (Rattus norvegicus (Rat)).